The primary structure comprises 240 residues: tRNA pseudouridine synthase A (240 aa).

Catalysis depends on aspartate 52, which acts as the Nucleophile. A substrate-binding site is contributed by tyrosine 110.

Belongs to the tRNA pseudouridine synthase TruA family. Homodimer.

It catalyses the reaction uridine(38/39/40) in tRNA = pseudouridine(38/39/40) in tRNA. Its function is as follows. Formation of pseudouridine at positions 38, 39 and 40 in the anticodon stem and loop of transfer RNAs. This chain is tRNA pseudouridine synthase A, found in Solibacter usitatus (strain Ellin6076).